The sequence spans 345 residues: Heat stress transcription factor A-4c (345 aa).

The DNA-binding element occupies 11–105 (LPPFLTKTYE…LMKNIHRRKP (95 aa)). Positions 119 to 185 (PLTESERRSM…SIVAYVSQVL (67 aa)) are hydrophobic repeat HR-A/B. The Nuclear localization signal signature appears at 199 to 203 (RRKRR). An AHA1 motif is present at residues 226-235 (LTFWENLVSE). The interval 240 to 329 (SGLQSSSMDH…NGNKIGNQRT (90 aa)) is disordered. Low complexity predominate over residues 274–283 (PPVTVTAPAP). Residues 289-298 (DDFWEQCLTE) carry the AHA2 motif. Composition is skewed to polar residues over residues 296 to 308 (LTEN…QQEV) and 317 to 329 (NDNN…NQRT).

This sequence belongs to the HSF family. Class A subfamily. As to quaternary structure, homotrimer. Post-translationally, exhibits temperature-dependent phosphorylation. As to expression, expressed in roots, seedlings and at lower levels in leaves.

It is found in the nucleus. Transcriptional activator that specifically binds DNA sequence 5'-AGAAnnTTCT-3' known as heat shock promoter elements (HSE). May be involved in general response to auxin. This is Heat stress transcription factor A-4c (HSFA4C) from Arabidopsis thaliana (Mouse-ear cress).